The following is a 548-amino-acid chain: Non-structural protein NS1 (548 aa).

The protein belongs to the orbivirus non-structural protein NS1 family.

In Camelus dromedarius (Dromedary), this protein is Non-structural protein NS1 (Segment-5).